Consider the following 534-residue polypeptide: N-acetylglutamate synthase, mitochondrial (534 aa).

Residues M1–R18 constitute a mitochondrion transit peptide. The tract at residues L19–R99 is disordered. Positions L19–R376 are amino-acid kinase domain (AAK). The span at V81–P96 shows a compositional bias: pro residues. The region spanning E375–H526 is the N-acetyltransferase domain. Residues K401, K444, and R474–N479 contribute to the substrate site.

Belongs to the acetyltransferase family. As to quaternary structure, homodimer. Homotetramer. In terms of processing, probably processed by mitochondrial processing peptidase (MPP). The long form has not yet been isolated. As to expression, highly expressed in the adult liver, kidney and small intestine. Weakly expressed in the fetal liver, lung, pancreas, placenta, heart and brain tissue.

Its subcellular location is the mitochondrion matrix. The enzyme catalyses L-glutamate + acetyl-CoA = N-acetyl-L-glutamate + CoA + H(+). It participates in amino-acid biosynthesis; L-arginine biosynthesis; N(2)-acetyl-L-ornithine from L-glutamate: step 1/4. Its activity is regulated as follows. Increased by L-arginine. In terms of biological role, plays a role in the regulation of ureagenesis by producing the essential cofactor N-acetylglutamate (NAG), thus modulating carbamoylphosphate synthase I (CPS1) activity. The polypeptide is N-acetylglutamate synthase, mitochondrial (NAGS) (Homo sapiens (Human)).